A 311-amino-acid chain; its full sequence is tRNA dimethylallyltransferase (311 aa).

ATP is bound at residue 16-23; that stretch reads GPTASGKS. A substrate-binding site is contributed by 18-23; the sequence is TASGKS. An interaction with substrate tRNA region spans residues 41-44; that stretch reads DSMQ.

Belongs to the IPP transferase family. As to quaternary structure, monomer. Mg(2+) serves as cofactor.

It carries out the reaction adenosine(37) in tRNA + dimethylallyl diphosphate = N(6)-dimethylallyladenosine(37) in tRNA + diphosphate. Catalyzes the transfer of a dimethylallyl group onto the adenine at position 37 in tRNAs that read codons beginning with uridine, leading to the formation of N6-(dimethylallyl)adenosine (i(6)A). The chain is tRNA dimethylallyltransferase from Geobacter sulfurreducens (strain ATCC 51573 / DSM 12127 / PCA).